The sequence spans 122 residues: Large ribosomal subunit protein uL14 (122 aa).

This sequence belongs to the universal ribosomal protein uL14 family. As to quaternary structure, part of the 50S ribosomal subunit. Forms a cluster with proteins L3 and L19. In the 70S ribosome, L14 and L19 interact and together make contacts with the 16S rRNA in bridges B5 and B8.

Its function is as follows. Binds to 23S rRNA. Forms part of two intersubunit bridges in the 70S ribosome. The sequence is that of Large ribosomal subunit protein uL14 from Cupriavidus taiwanensis (strain DSM 17343 / BCRC 17206 / CCUG 44338 / CIP 107171 / LMG 19424 / R1) (Ralstonia taiwanensis (strain LMG 19424)).